The sequence spans 112 residues: Nucleoid-associated protein FTM_1023 (112 aa).

It belongs to the YbaB/EbfC family. In terms of assembly, homodimer.

It localises to the cytoplasm. Its subcellular location is the nucleoid. Its function is as follows. Binds to DNA and alters its conformation. May be involved in regulation of gene expression, nucleoid organization and DNA protection. The chain is Nucleoid-associated protein FTM_1023 from Francisella tularensis subsp. mediasiatica (strain FSC147).